Here is a 306-residue protein sequence, read N- to C-terminus: UDP-3-O-acyl-N-acetylglucosamine deacetylase (306 aa).

Zn(2+)-binding residues include histidine 79, histidine 239, and aspartate 243. Catalysis depends on histidine 266, which acts as the Proton donor.

This sequence belongs to the LpxC family. Zn(2+) serves as cofactor.

The catalysed reaction is a UDP-3-O-[(3R)-3-hydroxyacyl]-N-acetyl-alpha-D-glucosamine + H2O = a UDP-3-O-[(3R)-3-hydroxyacyl]-alpha-D-glucosamine + acetate. The protein operates within glycolipid biosynthesis; lipid IV(A) biosynthesis; lipid IV(A) from (3R)-3-hydroxytetradecanoyl-[acyl-carrier-protein] and UDP-N-acetyl-alpha-D-glucosamine: step 2/6. In terms of biological role, catalyzes the hydrolysis of UDP-3-O-myristoyl-N-acetylglucosamine to form UDP-3-O-myristoylglucosamine and acetate, the committed step in lipid A biosynthesis. The protein is UDP-3-O-acyl-N-acetylglucosamine deacetylase of Actinobacillus pleuropneumoniae serotype 7 (strain AP76).